We begin with the raw amino-acid sequence, 305 residues long: 2-methoxy-6-polyprenyl-1,4-benzoquinol methylase, mitochondrial (305 aa).

The N-terminal 34 residues, methionine 1–tyrosine 34, are a transit peptide targeting the mitochondrion. Residues threonine 117, aspartate 143, and asparagine 173 to alanine 174 contribute to the S-adenosyl-L-methionine site.

This sequence belongs to the class I-like SAM-binding methyltransferase superfamily. MenG/UbiE family. In terms of assembly, component of a multi-subunit COQ enzyme complex, composed of at least COQ3, COQ4, COQ5, COQ6, COQ7 and COQ9.

The protein resides in the mitochondrion inner membrane. It catalyses the reaction 2-methoxy-6-(all-trans-decaprenyl)benzene-1,4-diol + S-adenosyl-L-methionine = 5-methoxy-2-methyl-3-(all-trans-decaprenyl)benzene-1,4-diol + S-adenosyl-L-homocysteine + H(+). It participates in cofactor biosynthesis; ubiquinone biosynthesis. Its function is as follows. Methyltransferase required for the conversion of 2-decaprenyl-6-methoxy-1,4-benzoquinol (DDMQH2) to 2-decaprenyl-3-methyl-6-methoxy-1,4-benzoquinol (DMQH2). This chain is 2-methoxy-6-polyprenyl-1,4-benzoquinol methylase, mitochondrial, found in Schizosaccharomyces pombe (strain 972 / ATCC 24843) (Fission yeast).